We begin with the raw amino-acid sequence, 634 residues long: 1-deoxy-D-xylulose-5-phosphate synthase (634 aa).

Residues His-73 and 114–116 (GHS) contribute to the thiamine diphosphate site. Residue Asp-145 coordinates Mg(2+). Thiamine diphosphate-binding positions include 146 to 147 (GS), Asn-174, Phe-285, and Glu-367. Residue Asn-174 participates in Mg(2+) binding.

Belongs to the transketolase family. DXPS subfamily. As to quaternary structure, homodimer. It depends on Mg(2+) as a cofactor. Thiamine diphosphate is required as a cofactor.

It carries out the reaction D-glyceraldehyde 3-phosphate + pyruvate + H(+) = 1-deoxy-D-xylulose 5-phosphate + CO2. It functions in the pathway metabolic intermediate biosynthesis; 1-deoxy-D-xylulose 5-phosphate biosynthesis; 1-deoxy-D-xylulose 5-phosphate from D-glyceraldehyde 3-phosphate and pyruvate: step 1/1. Functionally, catalyzes the acyloin condensation reaction between C atoms 2 and 3 of pyruvate and glyceraldehyde 3-phosphate to yield 1-deoxy-D-xylulose-5-phosphate (DXP). In Syntrophotalea carbinolica (strain DSM 2380 / NBRC 103641 / GraBd1) (Pelobacter carbinolicus), this protein is 1-deoxy-D-xylulose-5-phosphate synthase.